The following is a 329-amino-acid chain: Lipoyl synthase (329 aa).

Residues Cys72, Cys77, Cys83, Cys98, Cys102, Cys105, and Ser313 each contribute to the [4Fe-4S] cluster site. The Radical SAM core domain maps to 83–303 (CWSHGTATIM…QIGLKKGFFE (221 aa)).

This sequence belongs to the radical SAM superfamily. Lipoyl synthase family. It depends on [4Fe-4S] cluster as a cofactor.

The protein resides in the cytoplasm. The enzyme catalyses [[Fe-S] cluster scaffold protein carrying a second [4Fe-4S](2+) cluster] + N(6)-octanoyl-L-lysyl-[protein] + 2 oxidized [2Fe-2S]-[ferredoxin] + 2 S-adenosyl-L-methionine + 4 H(+) = [[Fe-S] cluster scaffold protein] + N(6)-[(R)-dihydrolipoyl]-L-lysyl-[protein] + 4 Fe(3+) + 2 hydrogen sulfide + 2 5'-deoxyadenosine + 2 L-methionine + 2 reduced [2Fe-2S]-[ferredoxin]. The protein operates within protein modification; protein lipoylation via endogenous pathway; protein N(6)-(lipoyl)lysine from octanoyl-[acyl-carrier-protein]: step 2/2. In terms of biological role, catalyzes the radical-mediated insertion of two sulfur atoms into the C-6 and C-8 positions of the octanoyl moiety bound to the lipoyl domains of lipoate-dependent enzymes, thereby converting the octanoylated domains into lipoylated derivatives. The sequence is that of Lipoyl synthase from Legionella pneumophila (strain Corby).